A 316-amino-acid polypeptide reads, in one-letter code: Probable peptidyl-tRNA hydrolase 2 (316 aa).

Residues 1–127 are disordered; it reads MSENIPDIDP…SHPVDPQEPN (127 aa). Residues 44-53 show a composition bias toward polar residues; that stretch reads PTPSSVTVDN. The span at 75–89 shows a compositional bias: low complexity; the sequence is IPEVPIPSSAISISS. One can recognise a UBA domain in the interval 128-169; that stretch reads EVNNEYLAHLLDLGFDEYTAVLALKRTNSAGVEQAVAWIVER. Positions 170-193 are disordered; sequence SNESDFDEDSSSSENEADEEMGAV. Residues 173–190 show a composition bias toward acidic residues; sequence SDFDEDSSSSENEADEEM.

Belongs to the PTH2 family.

The catalysed reaction is an N-acyl-L-alpha-aminoacyl-tRNA + H2O = an N-acyl-L-amino acid + a tRNA + H(+). In terms of biological role, the natural substrate for this enzyme may be peptidyl-tRNAs which drop off the ribosome during protein synthesis. The polypeptide is Probable peptidyl-tRNA hydrolase 2 (Caenorhabditis elegans).